The following is a 116-amino-acid chain: Large ribosomal subunit protein uL18 (116 aa).

This sequence belongs to the universal ribosomal protein uL18 family. As to quaternary structure, part of the 50S ribosomal subunit; part of the 5S rRNA/L5/L18/L25 subcomplex. Contacts the 5S and 23S rRNAs.

Functionally, this is one of the proteins that bind and probably mediate the attachment of the 5S RNA into the large ribosomal subunit, where it forms part of the central protuberance. The chain is Large ribosomal subunit protein uL18 from Ectopseudomonas mendocina (strain ymp) (Pseudomonas mendocina).